Reading from the N-terminus, the 515-residue chain is Na(+)/H(+) antiporter NhaB (515 aa).

The next 13 membrane-spanning stretches (helical) occupy residues isoleucine 23 to glycine 43, tryptophan 44 to glutamine 64, isoleucine 88 to methionine 108, leucine 119 to phenylalanine 139, phenylalanine 143 to valine 163, leucine 202 to proline 222, phenylalanine 238 to valine 258, glycine 303 to isoleucine 323, glycine 324 to glycine 344, leucine 357 to isoleucine 377, leucine 389 to alanine 409, alanine 447 to isoleucine 467, and methionine 477 to leucine 497.

Belongs to the NhaB Na(+)/H(+) (TC 2.A.34) antiporter family.

It localises to the cell inner membrane. It carries out the reaction 2 Na(+)(in) + 3 H(+)(out) = 2 Na(+)(out) + 3 H(+)(in). Its function is as follows. Na(+)/H(+) antiporter that extrudes sodium in exchange for external protons. This Mannheimia succiniciproducens (strain KCTC 0769BP / MBEL55E) protein is Na(+)/H(+) antiporter NhaB.